The primary structure comprises 161 residues: Arachidonate 5-lipoxygenase-activating protein (161 aa).

Residues 1–8 (MDQETVGN) are Lumenal-facing. Residues 9 to 30 (VVLLAIVTLISVVQNGFFAHKV) traverse the membrane as a helical segment. Residues 31–52 (EHESRTQNGRSFQRTGTLAFER) lie on the Cytoplasmic side of the membrane. A helical transmembrane segment spans residues 53–77 (VYTANQNCVDAYPTFLAVLWSAGLL). Topologically, residues 78-80 (CSQ) are lumenal. Residues 81-102 (VPAAFAGLMYLLVRQKYFVGYL) traverse the membrane as a helical segment. Residues 103 to 107 (GERTQ) lie on the Cytoplasmic side of the membrane. The stretch at 108 to 115 (STPGYIFG) is an intramembrane region. The chain crosses the membrane as a helical span at residues 116–128 (KRIILFLFLMSVA). Residues 129–161 (GIFNYYLIFFFGSDFENYIKTVTTTISPLLLIP) are Lumenal-facing.

Belongs to the MAPEG family. Homotrimer. Interacts with LTC4S and ALOX5.

Its subcellular location is the nucleus membrane. The protein resides in the endoplasmic reticulum membrane. Its function is as follows. Required for leukotriene biosynthesis by ALOX5 (5-lipoxygenase). Anchors ALOX5 to the membrane. Binds arachidonic acid, and could play an essential role in the transfer of arachidonic acid to ALOX5. Binds to MK-886, a compound that blocks the biosynthesis of leukotrienes. The chain is Arachidonate 5-lipoxygenase-activating protein (ALOX5AP) from Macaca fascicularis (Crab-eating macaque).